A 585-amino-acid polypeptide reads, in one-letter code: Probable inactive serine/threonine-protein kinase slob1 (585 aa).

The FYVE-type zinc-finger motif lies at 21–82 (DQSSLECNDC…LCRSCNNSFE (62 aa)). Zn(2+) contacts are provided by Cys-27, Cys-30, Cys-43, Cys-46, Cys-51, Cys-54, Cys-74, and Cys-77. Residues 108–478 (SKPLQDIGHT…STSLLNNSFN (371 aa)) enclose the Protein kinase domain. Composition is skewed to low complexity over residues 426–456 (ISKLSSSSSNNNSNNNNNNNNNSNTFNNISS) and 466–503 (LPSSTSLLNNSFNLSNNNNPSSPSTSTISPNSSLISSP). The interval 426–585 (ISKLSSSSSN…SLKPSSTKKK (160 aa)) is disordered. The span at 513-532 (TPPPPPPPPKSAPPPPPPPS) shows a compositional bias: pro residues. Over residues 533 to 542 (SSKLPPSSSS) the composition is skewed to low complexity. The WH2 domain occupies 542–562 (SRNSLLESIRNADNAKKLKKT).

The protein belongs to the protein kinase superfamily. Ser/Thr protein kinase family.

The polypeptide is Probable inactive serine/threonine-protein kinase slob1 (slob1) (Dictyostelium discoideum (Social amoeba)).